A 102-amino-acid chain; its full sequence is Large ribosomal subunit protein bL21 (102 aa).

It belongs to the bacterial ribosomal protein bL21 family. As to quaternary structure, part of the 50S ribosomal subunit. Contacts protein L20.

This protein binds to 23S rRNA in the presence of protein L20. This is Large ribosomal subunit protein bL21 from Listeria innocua serovar 6a (strain ATCC BAA-680 / CLIP 11262).